Reading from the N-terminus, the 153-residue chain is UPF0260 protein YcgN (153 aa).

It belongs to the UPF0260 family.

The polypeptide is UPF0260 protein YcgN (Salmonella paratyphi B (strain ATCC BAA-1250 / SPB7)).